Here is a 382-residue protein sequence, read N- to C-terminus: Sulfate adenylyltransferase (382 aa).

The protein belongs to the sulfate adenylyltransferase family.

It carries out the reaction sulfate + ATP + H(+) = adenosine 5'-phosphosulfate + diphosphate. It participates in sulfur metabolism; hydrogen sulfide biosynthesis; sulfite from sulfate: step 1/3. The chain is Sulfate adenylyltransferase from Staphylothermus marinus (strain ATCC 43588 / DSM 3639 / JCM 9404 / F1).